Reading from the N-terminus, the 462-residue chain is MAAGGPCPAAAGGGPGGASCSVGAPGGVSMFRWLEVLEKEFDKAFVDVDLLLGEIDPDQADITYEGRQKMTSLSSCFAQLCHKAQSVSQINHKLEAQLVDLKSELTETQAEKVVLEKEVHDQLLQLHSIQLQLHAKTGQSVDSGTIKAKLSGPSVEELERELEANKKEKMKEAQLEAEVKLLRKEDEALRGHIAVLQAEVYGARLAAKYLDKELAGRVQQIQLLGRDMKGPAHDKLWNQLEAEIHLHRHKTVIRACRGRNDLKRPMQAPPGHDQDSLKKSQGVGPIRKVLLLKEDHEGLGISITGGKEHGVPILISEIHPGQPADRCGGLHVGDAILAVDGVNLRDTKHKEAVTVLSQQRGEIEFEVVYVAPEVDSDDENVEYEDESGHRYRLYLDELEGGGNPGASCKDPSGEIKVLQGFNKKAVTDTHENGDLGTASETPLDDGASKLDDLHTLYHKKSY.

A coiled-coil region spans residues 83–194 (KAQSVSQINH…EDEALRGHIA (112 aa)). A PDZ domain is found at 288 to 371 (KVLLLKEDHE…EIEFEVVYVA (84 aa)). Positions 427 to 449 (TDTHENGDLGTASETPLDDGASK) are disordered.

In terms of assembly, homooligomer. Interacts with FZD5. Interacts with FZD8. Interacts with GRID2 and BECN1. Interacts with CSPG5. Interacts with CLCN3. Interacts with STX6. Interacts with CFTR. Interacts with ASIC3. Interacts with GOLGA3. Interacts with NLGN1. Interacts with RHOQ. Interacts with MARCHF2; the interaction leads to CFTR ubiquitination and degradation. May interact with CACNG2. Interacts with CCDC62.

The protein resides in the cytoplasm. It is found in the golgi apparatus membrane. It localises to the golgi apparatus. Its subcellular location is the trans-Golgi network membrane. The protein localises to the synapse. The protein resides in the postsynaptic density. It is found in the cell projection. It localises to the dendrite. Its function is as follows. Plays a role in intracellular protein trafficking and degradation. May regulate CFTR chloride currents and acid-induced ASIC3 currents by modulating cell surface expression of both channels. May also regulate the intracellular trafficking of the ADR1B receptor. May play a role in autophagy. Together with MARCHF2 mediates the ubiquitination and lysosomal degradation of CFTR. Overexpression results in CFTR intracellular retention and degradation in the lysosomes. The sequence is that of Golgi-associated PDZ and coiled-coil motif-containing protein (GOPC) from Pongo abelii (Sumatran orangutan).